Consider the following 488-residue polypeptide: Cytochrome P450 family 716 subfamily AD polypeptide 2 (488 aa).

The helical transmembrane segment at leucine 5–isoleucine 25 threads the bilayer. Cysteine 433 contributes to the heme binding site.

This sequence belongs to the cytochrome P450 family. The cofactor is heme. In terms of tissue distribution, expressed in maturing fruits and in juice vesicles.

It is found in the membrane. The enzyme catalyses (1R,2R,3S,8R,10R,11R,15S,16S)-3-(acetyloxy)-15-[(4R)-4-[(2S)-3,3-dimethyloxiran-2-yl]-1,4-dihydroxybutan-2-yl]-2,7,7,11,16-pentamethyl-5-oxo-6-oxatetracyclo[9.7.0.0(2,8).0(12,16)]octadec-12-en-10-yl acetate + reduced [NADPH--hemoprotein reductase] + O2 = (1R,2R,3S,8R,10R,11R,15S,16S)-3-(acetyloxy)-15-(1-hydroxy-4-oxobutan-2-yl)-2,7,7,11,16-pentamethyl-5-oxo-6-oxatetracyclo[9.7.0.0(2,8).0(12,16)]octadec-12-en-10-yl acetate + 2-methylpropanoate + oxidized [NADPH--hemoprotein reductase] + H2O + 2 H(+). It participates in secondary metabolite biosynthesis; terpenoid biosynthesis. Monooxygenase involved in the biosynthesis of limonoids triterpene natural products such as limonin, a compound with insecticidal activity responsible for the bitter taste in citrus. Catalyzes the formation of (1R,2R,3S,8R,10R,11R,15S,16S)-3-(acetyloxy)-15-(1-hydroxy-4-oxobutan-2-yl)-2,7,7,11,16-pentamethyl-5-oxo-6-oxatetracyclo[9.7.0.0(2,8).0(12,16)]octadec-12-en-10-yl acetate. This chain is Cytochrome P450 family 716 subfamily AD polypeptide 2, found in Citrus sinensis (Sweet orange).